The sequence spans 542 residues: Zinc finger protein 280A (542 aa).

The disordered stretch occupies residues 66–185 (VTPGSNSRRK…RDSKRVKLRD (120 aa)). The segment covering 107 to 122 (EGRSTDSPVTMKSSSE) has biased composition (polar residues). The span at 128 to 143 (SSPQVVSPSSSDSLPP) shows a compositional bias: low complexity. The segment covering 161-185 (SSPDSKRLSTSDINSRDSKRVKLRD) has biased composition (basic and acidic residues). C2H2-type zinc fingers lie at residues 334–357 (TTCQHCHRQFPTPFQLQCHIDSVH), 364–387 (AVCKICELSFETDQVLLQHMKDHH), 423–445 (LLCLFCLKLFKTAIPYMNHCWRH), and 451–474 (LQCSKCRLQFLTLKEEIEHKTKDH). Over residues 499–520 (QPGSSGMASVIVSNTDPQSSPV) the composition is skewed to polar residues. Residues 499-542 (QPGSSGMASVIVSNTDPQSSPVKTKKKTAMNTRDSRLPCSKDSS) form a disordered region.

It is found in the nucleus. Its function is as follows. May function as a transcription factor. This Homo sapiens (Human) protein is Zinc finger protein 280A (ZNF280A).